Consider the following 1460-residue polypeptide: CLIP-associating protein 1-A (1460 aa).

2 HEAT repeats span residues 87–124 (TQLGTVLPSLMDRLGDAKDSVREQDQSLLIKIMEQASN) and 163–200 (LTLSKIVPHICNLLGDPNSQVRDAAINCLVEIYRHVGE). Positions 237–293 (SDKNFDDEDSVDGNRPSSASSSASSKAPQTARRGVSLGTARRPGPSSAAAKTGGTAK) are disordered. The span at 279–293 (PGPSSAAAKTGGTAK) shows a compositional bias: low complexity. HEAT repeat units follow at residues 407 to 442 (HGAEAIMPTVFNLVPNSAKIMATSGIVAIRLIIRHT) and 443 to 479 (HVPRLIPIITSNCTSKSVAVRRRCYDFLDLLLQEWQT). 3 disordered regions span residues 545–605 (SDSI…IDVN), 640–733 (IRTR…RFGI), and 778–800 (PYGMYSDDDANSDASSACSERSY). Over residues 550–569 (SLPQSDRSSSSSQESLNRPL) the composition is skewed to low complexity. The span at 571–597 (TKRSPTGSTVSRASSTTSKSTPGSLQR) shows a compositional bias: polar residues. A compositionally biased stretch (low complexity) spans 645-659 (QSSGSTTSTASTPAD). Polar residues-rich tracts occupy residues 669 to 681 (VSQSQPGSRSNSP) and 715 to 724 (QGCSRETSPS). A compositionally biased stretch (low complexity) spans 789–800 (SDASSACSERSY). An HEAT 5 repeat occupies 942 to 979 (FIVDQTQTPNLKVKVAILKYIESLARQMDPTDFVNSSE). Positions 1041-1084 (LKNSSNSSMGSPSNTIGRTPSRHSSSRASPLTSPTNCSHGGLSP) are disordered. Residues 1042–1054 (KNSSNSSMGSPSN) are compositionally biased toward low complexity. The segment covering 1066-1078 (SRASPLTSPTNCS) has biased composition (polar residues). 2 HEAT repeats span residues 1272 to 1309 (LLLETLGDKDHAIRALALRVLREILRNQPARFKNYAEL) and 1390 to 1427 (GLLQGYDNTESSVRKASVFCLVAIYSVIGEELKPYLAQ).

This sequence belongs to the CLASP family.

It is found in the cytoplasm. Its subcellular location is the cytoskeleton. The protein resides in the microtubule organizing center. The protein localises to the centrosome. It localises to the chromosome. It is found in the centromere. Its subcellular location is the kinetochore. The protein resides in the spindle. The protein localises to the golgi apparatus. It localises to the trans-Golgi network. Microtubule plus-end tracking protein that promotes the stabilization of dynamic microtubules during anaphase. Plays a crucial role in chromatin-induced microtubule formation. May also act at microtubule minus ends. May be involved in the nucleation of noncentrosomal microtubules originating from the trans-Golgi network (TGN). The sequence is that of CLIP-associating protein 1-A (clasp1-a) from Xenopus laevis (African clawed frog).